An 82-amino-acid polypeptide reads, in one-letter code: MGGISIWQLLIIAVIIVLLFGTKKLRGVGSDLGSAVKGFKKAISEDESAKDAKKDADFVPQNLEKKEAETVEKQKQNDKEQA.

Residues 1 to 21 (MGGISIWQLLIIAVIIVLLFG) form a helical membrane-spanning segment. A disordered region spans residues 48 to 82 (SAKDAKKDADFVPQNLEKKEAETVEKQKQNDKEQA).

The protein belongs to the TatA/E family. As to quaternary structure, the Tat system comprises two distinct complexes: a TatABC complex, containing multiple copies of TatA, TatB and TatC subunits, and a separate TatA complex, containing only TatA subunits. Substrates initially bind to the TatABC complex, which probably triggers association of the separate TatA complex to form the active translocon.

It localises to the cell inner membrane. In terms of biological role, part of the twin-arginine translocation (Tat) system that transports large folded proteins containing a characteristic twin-arginine motif in their signal peptide across membranes. TatA could form the protein-conducting channel of the Tat system. This Aliivibrio salmonicida (strain LFI1238) (Vibrio salmonicida (strain LFI1238)) protein is Sec-independent protein translocase protein TatA.